The sequence spans 252 residues: 2-succinyl-6-hydroxy-2,4-cyclohexadiene-1-carboxylate synthase (252 aa).

The protein belongs to the AB hydrolase superfamily. MenH family. As to quaternary structure, monomer.

The catalysed reaction is 5-enolpyruvoyl-6-hydroxy-2-succinyl-cyclohex-3-ene-1-carboxylate = (1R,6R)-6-hydroxy-2-succinyl-cyclohexa-2,4-diene-1-carboxylate + pyruvate. It functions in the pathway quinol/quinone metabolism; 1,4-dihydroxy-2-naphthoate biosynthesis; 1,4-dihydroxy-2-naphthoate from chorismate: step 3/7. It participates in quinol/quinone metabolism; menaquinone biosynthesis. Catalyzes a proton abstraction reaction that results in 2,5-elimination of pyruvate from 2-succinyl-5-enolpyruvyl-6-hydroxy-3-cyclohexene-1-carboxylate (SEPHCHC) and the formation of 2-succinyl-6-hydroxy-2,4-cyclohexadiene-1-carboxylate (SHCHC). The chain is 2-succinyl-6-hydroxy-2,4-cyclohexadiene-1-carboxylate synthase from Salmonella agona (strain SL483).